Here is a 538-residue protein sequence, read N- to C-terminus: [Pyruvate dehydrogenase [acetyl-transferring]]-phosphatase 1, mitochondrial (538 aa).

A mitochondrion-targeting transit peptide spans 1 to 71 (MPAPTQLFFP…WWQYTQGRRY (71 aa)). In terms of domain architecture, PPM-type phosphatase spans 109-525 (ILGFDSNQLP…DDITIIVVQF (417 aa)). Mn(2+) contacts are provided by Asp144 and Gly145. Lys202 is subject to N6-acetyllysine. Asp418 and Asp516 together coordinate Mn(2+).

The protein belongs to the PP2C family. As to quaternary structure, heterodimer of a catalytic (PDP1) and a regulatory (PDPR) subunit. It depends on Mn(2+) as a cofactor. Requires Mg(2+) as cofactor.

It is found in the mitochondrion. The enzyme catalyses O-phospho-L-seryl-[pyruvate dehydrogenase E1 alpha subunit] + H2O = L-seryl-[pyruvate dehydrogenase E1 alpha subunit] + phosphate. Its activity is regulated as follows. Magnesium-dependent and calcium-stimulated. PDP1 activity strongly depends on its Ca(2+)-dependent binding to the lipoyl domain of E2 subunit of component of the pyruvate dehydrogenase complex. Mitochondrial enzyme that catalyzes the dephosphorylation and concomitant reactivation of the alpha subunit of the E1 component of the pyruvate dehydrogenase complex (PDC), thereby stimulating the conversion of pyruvate into acetyl-CoA. The protein is [Pyruvate dehydrogenase [acetyl-transferring]]-phosphatase 1, mitochondrial (Pdp1) of Mus musculus (Mouse).